We begin with the raw amino-acid sequence, 201 residues long: 3-isopropylmalate dehydratase small subunit (201 aa).

It belongs to the LeuD family. LeuD type 1 subfamily. As to quaternary structure, heterodimer of LeuC and LeuD.

The catalysed reaction is (2R,3S)-3-isopropylmalate = (2S)-2-isopropylmalate. Its pathway is amino-acid biosynthesis; L-leucine biosynthesis; L-leucine from 3-methyl-2-oxobutanoate: step 2/4. Functionally, catalyzes the isomerization between 2-isopropylmalate and 3-isopropylmalate, via the formation of 2-isopropylmaleate. The polypeptide is 3-isopropylmalate dehydratase small subunit (Shewanella baltica (strain OS223)).